Here is a 159-residue protein sequence, read N- to C-terminus: MFVLNFELAGVNKNDIKIEIKDSLLCIQGEKYKSMNNNNKNNLQINNDDKPMIEEEDDDSSSSSNNNNNNNNNNNNNNNNNNNNNNNNNSNNNNNKSSKTNDKKFISERSFGHFEKYLDLSPVFYQLDLSTINAQFEDGLLTITVRKTNLSNNIKIQIN.

Residues 1–159 form the sHSP domain; the sequence is MFVLNFELAG…LSNNIKIQIN (159 aa). A disordered region spans residues 35–101; it reads MNNNNKNNLQ…NNNNKSSKTN (67 aa). 2 stretches are compositionally biased toward low complexity: residues 36–46 and 61–95; these read NNNNKNNLQIN and SSSS…NNNN.

Belongs to the small heat shock protein (HSP20) family.

This chain is Small heat shock protein hspM (hspM), found in Dictyostelium discoideum (Social amoeba).